Here is a 134-residue protein sequence, read N- to C-terminus: Profilin-4 (134 aa).

The cysteines at positions 13 and 118 are disulfide-linked. The Involved in PIP2 interaction signature appears at 84 to 100 (AVIRGKKGSGGITIKKT). The residue at position 114 (threonine 114) is a Phosphothreonine.

The protein belongs to the profilin family. Occurs in many kinds of cells as a complex with monomeric actin in a 1:1 ratio. Post-translationally, phosphorylated by MAP kinases.

Its subcellular location is the cytoplasm. The protein localises to the cytoskeleton. Its function is as follows. Binds to actin and affects the structure of the cytoskeleton. At high concentrations, profilin prevents the polymerization of actin, whereas it enhances it at low concentrations. This is Profilin-4 from Olea europaea (Common olive).